The primary structure comprises 791 residues: Phenylalanine--tRNA ligase beta subunit (791 aa).

The region spanning 39–149 (GDEIQNVVTG…SDTAIGKDIK (111 aa)) is the tRNA-binding domain. The B5 domain maps to 403-478 (IKERNLKVDS…RIYGYNNIPT (76 aa)). Residues Asp-456, Asp-462, Glu-465, and Glu-466 each coordinate Mg(2+). One can recognise an FDX-ACB domain in the interval 698 to 791 (PKFPAVDRDM…LENNLGAELR (94 aa)).

Belongs to the phenylalanyl-tRNA synthetase beta subunit family. Type 1 subfamily. As to quaternary structure, tetramer of two alpha and two beta subunits. Mg(2+) serves as cofactor.

Its subcellular location is the cytoplasm. The enzyme catalyses tRNA(Phe) + L-phenylalanine + ATP = L-phenylalanyl-tRNA(Phe) + AMP + diphosphate + H(+). This chain is Phenylalanine--tRNA ligase beta subunit, found in Clostridium tetani (strain Massachusetts / E88).